Reading from the N-terminus, the 275-residue chain is LexA repressor (275 aa).

Residues 1–50 form a disordered region; the sequence is MKRSTPRPARSQAALTTSSEESPDRVERGGDGVATVTDFPDGPPDETGLT. A DNA-binding region (H-T-H motif) is located at residues 73 to 93; that stretch reads MREIGEAVGLTSTSSVAHQLM. Positions 114 to 151 are disordered; sequence RSAESAVPDASAGHSPAADRAPSARRPPRGPSPIDSNP. Catalysis depends on for autocatalytic cleavage activity residues S199 and K236.

It belongs to the peptidase S24 family. As to quaternary structure, homodimer.

It carries out the reaction Hydrolysis of Ala-|-Gly bond in repressor LexA.. Its function is as follows. Represses a number of genes involved in the response to DNA damage (SOS response), including recA and lexA. In the presence of single-stranded DNA, RecA interacts with LexA causing an autocatalytic cleavage which disrupts the DNA-binding part of LexA, leading to derepression of the SOS regulon and eventually DNA repair. This Acidothermus cellulolyticus (strain ATCC 43068 / DSM 8971 / 11B) protein is LexA repressor.